Here is a 312-residue protein sequence, read N- to C-terminus: Ribosomal RNA small subunit methyltransferase H (312 aa).

A disordered region spans residues 1-24; that stretch reads MNIMTANQGAVSPSQTESEASPPT. Residues 55–57, D72, Y96, D117, and Q124 each bind S-adenosyl-L-methionine; that span reads AGH. Residues 288-312 form a disordered region; that stretch reads EQVDNPRARSAKLRVGERAAAPEGS.

The protein belongs to the methyltransferase superfamily. RsmH family.

The protein localises to the cytoplasm. The enzyme catalyses cytidine(1402) in 16S rRNA + S-adenosyl-L-methionine = N(4)-methylcytidine(1402) in 16S rRNA + S-adenosyl-L-homocysteine + H(+). In terms of biological role, specifically methylates the N4 position of cytidine in position 1402 (C1402) of 16S rRNA. The polypeptide is Ribosomal RNA small subunit methyltransferase H (Deinococcus radiodurans (strain ATCC 13939 / DSM 20539 / JCM 16871 / CCUG 27074 / LMG 4051 / NBRC 15346 / NCIMB 9279 / VKM B-1422 / R1)).